Here is a 1641-residue protein sequence, read N- to C-terminus: Alpha-2-macroglobulin (1641 aa).

A signal peptide spans 1-31 (MRDRVAMMLRPLVRGWIPRAVLLLTVAFSFG). Cysteine 32 carries N-palmitoyl cysteine lipidation. Cysteine 32 carries S-diacylglycerol cysteine lipidation. The isoglutamyl cysteine thioester (Cys-Gln) cross-link spans 1166–1169 (CAEQ).

Belongs to the protease inhibitor I39 (alpha-2-macroglobulin) family. Bacterial alpha-2-macroglobulin subfamily.

Its subcellular location is the cell membrane. In terms of biological role, protects the bacterial cell from host peptidases. The protein is Alpha-2-macroglobulin of Xylella fastidiosa (strain Temecula1 / ATCC 700964).